Here is a 131-residue protein sequence, read N- to C-terminus: ER membrane protein complex subunit 5 (131 aa).

Residues 1 to 3 (MAP) lie on the Cytoplasmic side of the membrane. A helical transmembrane segment spans residues 4–22 (SLWKGLVGVGLFALAHAAF). Residues 23-43 (SAAQHRSYMRLTEKEDESLPI) are Lumenal-facing. A helical membrane pass occupies residues 44–63 (DIVLQTLLAFAVTCYGIVHI). Residues 64–131 (AGEFKDMDAT…KLRKFDSLRR (68 aa)) lie on the Cytoplasmic side of the membrane. At serine 120 the chain carries Phosphoserine.

Belongs to the membrane magnesium transporter (TC 1.A.67) family. As to quaternary structure, component of the ER membrane protein complex (EMC). In terms of tissue distribution, abundant in heart muscle and kidney with lower levels in liver and brain and very little expression in intestine or colon. In kidney, highest levels in distal convoluted tubule.

Its subcellular location is the endoplasmic reticulum membrane. It is found in the golgi apparatus membrane. The protein resides in the early endosome membrane. Part of the endoplasmic reticulum membrane protein complex (EMC) that enables the energy-independent insertion into endoplasmic reticulum membranes of newly synthesized membrane proteins. Preferentially accommodates proteins with transmembrane domains that are weakly hydrophobic or contain destabilizing features such as charged and aromatic residues. Involved in the cotranslational insertion of multi-pass membrane proteins in which stop-transfer membrane-anchor sequences become ER membrane spanning helices. It is also required for the post-translational insertion of tail-anchored/TA proteins in endoplasmic reticulum membranes. By mediating the proper cotranslational insertion of N-terminal transmembrane domains in an N-exo topology, with translocated N-terminus in the lumen of the ER, controls the topology of multi-pass membrane proteins like the G protein-coupled receptors. By regulating the insertion of various proteins in membranes, it is indirectly involved in many cellular processes. May be involved Mg(2+) transport. This chain is ER membrane protein complex subunit 5, found in Mus musculus (Mouse).